The primary structure comprises 116 residues: Early 4 ORF3 protein (116 aa).

This sequence belongs to the adenoviridae E4 ORF3 family. Homodimer. Multimerizes through C-terminus tail by reciprocal or nonreciprocal interactions. Interacts with host PML isoform 2 C-terminal disordered region. Interacts with E1B-55k; this interaction is necessary for E1B 55 kDa protein to localize to the nuclear matrix fraction of the cell. May interact with host TRIM24, CREBBP, EP300, PRKDC and the MRN complex MRE11/RAD50/NBS1; these interactions may happen through nuclear bodies complexes.

It localises to the host nucleus. In terms of biological role, forms a multivalent network in host nucleus that inhibits nuclear bodies and prevents antiviral cellular activities. The network is made of multimerized dimers and surrounds adenovirus replication centers and nucleolus. Plays a role in splicing of the major late transcript. Prevents viral genome concatemer formation. The protein is Early 4 ORF3 protein of Human adenovirus C serotype 2 (HAdV-2).